Reading from the N-terminus, the 875-residue chain is Metal transporter CNNM2 (875 aa).

The Extracellular segment spans residues 1–250 (MIGCGACEPE…TKMIVGEEKK (250 aa)). The N-linked (GlcNAc...) asparagine glycan is linked to Asn112. The segment at 121–149 (TEHERRRHTPSERGLGGPAPPEPDSGPQR) is disordered. The chain crosses the membrane as a helical span at residues 251 to 271 (FLLPFWLQVIFISLLLCLSGM). One can recognise a CNNM transmembrane domain in the interval 251–431 (FLLPFWLQVI…DPYNDLVKEE (181 aa)). The Cytoplasmic segment spans residues 272-313 (FSGLNLGLMALDPMELRIVQNCGTEKEKNYAKRIEPVRRQGN). Positions 314-334 (YLLCSLLLGNVLVNTTLTILL) form an intramembrane region, helical. At 335–338 (DDIA) the chain is on the cytoplasmic side. A helical membrane pass occupies residues 339 to 359 (GSGLVAVVVSTIGIVIFGEIV). Residues 360–368 (PQAICSRHG) are Extracellular-facing. A helical transmembrane segment spans residues 369-389 (LAVGANTIFLTKFFMMMTFPA). The Cytoplasmic segment spans residues 390-875 (SYPVSKLLDC…NHSLHSEGAI (486 aa)). 2 consecutive CBS domains span residues 450–511 (MTPL…CTPL) and 518–584 (YNHP…ILDE). The interval 741–763 (AGSPGENKSPPRPCGLNHSDSLS) is disordered. Ser761 is subject to Phosphoserine.

This sequence belongs to the ACDP family. Isoform 1 and isoform 2 may interact with each other. The N-terminus is cleaved within the endoplasmic reticulum. The signal peptidase complex seems to be involved in the processing, but the exact cleavage site has not been identified. As to expression, widely expressed, with highest levels in kidney, lung, spleen and testis. In the kidney, predominantly expressed in the distal convoluted tubule and, at lower levels, in the connecting tubule (at protein level).

It is found in the cell membrane. Divalent metal cation transporter. Mediates transport of divalent metal cations in an order of Mg(2+) &gt; Co(2+) &gt; Mn(2+) &gt; Sr(2+) &gt; Ba(2+) &gt; Cu(2+) &gt; Fe(2+). The polypeptide is Metal transporter CNNM2 (Cnnm2) (Mus musculus (Mouse)).